The following is a 194-amino-acid chain: Protein LKAAEAR1 (194 aa).

Residues 1-45 (MPPPAKEGGRKGPRERSGKSAPGTAQGEERAKGAPATEPPKPGWA) form a disordered region. Residues 7–18 (EGGRKGPRERSG) show a composition bias toward basic and acidic residues.

This Homo sapiens (Human) protein is Protein LKAAEAR1 (LKAAEAR1).